Consider the following 503-residue polypeptide: E3 ubiquitin-protein ligase ariadne-1 (503 aa).

Residues 1–11 are compositionally biased toward acidic residues; that stretch reads MDSDNDNDFCD. The tract at residues 1-40 is disordered; sequence MDSDNDNDFCDNVDSGNVSSGDDGDDDFGMEVDLPSSADR. Residues 12-21 show a composition bias toward low complexity; sequence NVDSGNVSSG. A TRIAD supradomain region spans residues 129–340; the sequence is QCEECEICFS…SSWYNCNRYD (212 aa). Zn(2+) is bound by residues cysteine 133, cysteine 136, cysteine 150, histidine 152, cysteine 155, cysteine 158, cysteine 178, cysteine 183, cysteine 223, cysteine 228, cysteine 244, cysteine 246, cysteine 251, cysteine 254, histidine 259, cysteine 264, cysteine 291, and cysteine 294. The RING-type 1 zinc-finger motif lies at 133–183; that stretch reads CEICFSQLPPDSMAGLECGHRFCMPCWHEYLSTKIVAEGLGQTISCAAHGC. The segment at 133–201 is important for interaction with Ubc10; sequence CEICFSQLPP…VANLVTDARV (69 aa). The segment at 203–264 adopts an IBR-type zinc-finger fold; it reads VKYQQLITNS…GENWHDPVKC (62 aa). An RING-type 2; atypical zinc finger spans residues 291-322; the sequence is CPRCSVTIEKDGGCNHMVCKNQNCKNEFCWVC. Residue cysteine 304 is part of the active site. Zn(2+) contacts are provided by cysteine 309, cysteine 314, cysteine 319, cysteine 322, histidine 329, and cysteine 336. Residues 341–361 are a coiled coil; that stretch reads EDEAKTARDAQEKLRSSLARY.

The protein belongs to the RBR family. Ariadne subfamily. As to quaternary structure, can form homodimers. Interacts (via RING-type 1 zinc finger) with Ubc10. Interacts with the LINC complex member koi. Interacts with park. Interacts with ari-2. Specifically interacts with isoform ECR-A of EcR. Post-translationally, autophosphorylated. In terms of tissue distribution, widely expressed, with prominent levels in the nervous system and female gonads.

It localises to the cytoplasm. It is found in the nucleus. The enzyme catalyses [E2 ubiquitin-conjugating enzyme]-S-ubiquitinyl-L-cysteine + [acceptor protein]-L-lysine = [E2 ubiquitin-conjugating enzyme]-L-cysteine + [acceptor protein]-N(6)-ubiquitinyl-L-lysine.. In terms of biological role, atypical E3 ubiquitin-protein ligase, which catalyzes ubiquitination of target proteins together with ubiquitin-conjugating enzyme E2 Ubc10. Controls the subcellular localization and morphology of muscle nuclei (myonuclei) by regulating the protein levels and distribution of the LINC (LInker of Nucleoskeleton and Cytoskeleton) complex. Functions by mediating the monoubiquitination of the LINC complex subunit koi leading to its subsequent proteasomal degradation. Appears to function, at least partially redundantly, with the RBR E3 ligase family member park in nuclear localization and morphology. Likely to function in metamorphosis by regulating the proteins levels of EcR isoform A (ECR-A) and its heterodimeric partner usp, via the ubiquitination and subsequent degradation of ECR-A. This is E3 ubiquitin-protein ligase ariadne-1 from Drosophila melanogaster (Fruit fly).